The following is a 247-amino-acid chain: Eukaryotic translation initiation factor 6 (247 aa).

Phosphoserine; by CK1 occurs at positions 174 and 175.

It belongs to the eIF-6 family. Monomer. Associates with the 60S ribosomal subunit. Phosphorylation at Ser-174 and Ser-175 promotes nuclear export.

It localises to the cytoplasm. The protein resides in the nucleus. Its subcellular location is the nucleolus. Its function is as follows. Binds to the 60S ribosomal subunit and prevents its association with the 40S ribosomal subunit to form the 80S initiation complex in the cytoplasm. Is also involved in ribosome biogenesis. Associates with pre-60S subunits in the nucleus and is involved in its nuclear export. The chain is Eukaryotic translation initiation factor 6 (tif6) from Talaromyces stipitatus (strain ATCC 10500 / CBS 375.48 / QM 6759 / NRRL 1006) (Penicillium stipitatum).